A 25-amino-acid chain; its full sequence is Cruzioseptin-13 (25 aa).

At Asn25 the chain carries Asparagine amide.

In terms of tissue distribution, expressed by the skin glands.

It is found in the secreted. Functionally, has antimicrobial activity. The sequence is that of Cruzioseptin-13 from Cruziohyla calcarifer (Splendid leaf frog).